The sequence spans 496 residues: Genome polyprotein (496 aa).

Residues 1–447 (SRCTHLENRD…HTVLGGAFNS (447 aa)) are Extracellular-facing. Intrachain disulfides connect cysteine 3–cysteine 30, cysteine 60–cysteine 116, cysteine 60–cysteine 121, cysteine 74–cysteine 105, cysteine 92–cysteine 116, and cysteine 92–cysteine 121. The interval 98–111 (DRGWGNHCGLFGKG) is fusion peptide. The N-linked (GlcNAc...) asparagine; by host glycan is linked to asparagine 154. 2 disulfide bridges follow: cysteine 186-cysteine 290 and cysteine 307-cysteine 338. Residues 448-468 (IFGGVGFLPKLLMGVALAWLG) form a helical membrane-spanning segment. Topologically, residues 469–479 (LNTRNPTMSMS) are cytoplasmic. A helical transmembrane segment spans residues 480–496 (FLLAGGLVLAMTLGVGA).

Homodimer; in the endoplasmic reticulum and Golgi. In terms of processing, N-glycosylated.

The protein localises to the virion membrane. The protein resides in the host endoplasmic reticulum membrane. Functionally, binds to host cell surface receptor and mediates fusion between viral and cellular membranes. Envelope protein is synthesized in the endoplasmic reticulum in the form of heterodimer with protein prM. They play a role in virion budding in the ER, and the newly formed immature particle is covered with 60 spikes composed of heterodimer between precursor prM and envelope protein E. The virion is transported to the Golgi apparatus where the low pH causes dissociation of PrM-E heterodimers and formation of E homodimers. prM-E cleavage is ineficient, and many virions are only partially matured. These uncleaved prM would play a role in immune evasion. This chain is Genome polyprotein, found in Bos taurus (Bovine).